The sequence spans 151 residues: Nascent polypeptide-associated complex subunit beta (151 aa).

The region spanning 32-97 is the NAC-A/B domain; sequence EQDDTKLMEA…PQEKDVTQLI (66 aa). Positions 122 to 151 are disordered; sequence GKTPSMGGENAGADEDIPDLIEGQKFDEVE.

Belongs to the NAC-beta family. In terms of assembly, part of the nascent polypeptide-associated complex (NAC), consisting of EGD2 and EGD1. NAC associates with ribosomes via EGD1.

The protein resides in the cytoplasm. The protein localises to the nucleus. In terms of biological role, component of the nascent polypeptide-associated complex (NAC), a dynamic component of the ribosomal exit tunnel, protecting the emerging polypeptides from interaction with other cytoplasmic proteins to ensure appropriate nascent protein targeting. The NAC complex also promotes mitochondrial protein import by enhancing productive ribosome interactions with the outer mitochondrial membrane and blocks the inappropriate interaction of ribosomes translating non-secretory nascent polypeptides with translocation sites in the membrane of the endoplasmic reticulum. EGD1 may act as a transcription factor that exert a negative effect on the expression of several genes that are transcribed by RNA polymerase II. In Meyerozyma guilliermondii (strain ATCC 6260 / CBS 566 / DSM 6381 / JCM 1539 / NBRC 10279 / NRRL Y-324) (Yeast), this protein is Nascent polypeptide-associated complex subunit beta (EGD1).